A 314-amino-acid chain; its full sequence is F-box protein AUF2 (314 aa).

Positions 1–49 (MDVFDGLPDPIIVDILNKVGDVKTLLRCSSLSKRFNSLVPQSESLTLRL) constitute an F-box domain.

As to quaternary structure, part of a SCF (ASK-cullin-F-box) protein ligase complex.

It is found in the nucleus. It functions in the pathway protein modification; protein ubiquitination. Its function is as follows. Component of SCF(ASK-cullin-F-box) E3 ubiquitin ligase complexes, which may mediate the ubiquitination and subsequent proteasomal degradation of target proteins. This chain is F-box protein AUF2, found in Arabidopsis thaliana (Mouse-ear cress).